Reading from the N-terminus, the 479-residue chain is Phosphoglycerate kinase, glycosomal (479 aa).

Residues Val23, Asp24, Phe25, Asn26, Arg39, Ser61, His62, Gly64, Arg65, Arg132, His168, and Arg169 each contribute to the (2R)-3-phosphoglycerate site. Residues Gly214 and Ala215 each coordinate ADP. Gly214 is a CDP binding site. AMP-binding residues include Ala215 and Lys216. Residue Ala215 coordinates ATP. Ala215 lines the Mg(2+) pocket. Lys216 is a (2R)-3-phosphoglycerate binding site. Asp219 is a binding site for CDP. Mg(2+) is bound at residue Asp219. Residues Lys220 and Gly238 each contribute to the ADP site. AMP is bound at residue Lys220. Lys220 provides a ligand contact to ATP. Position 238 (Gly238) interacts with CDP. Residues Ala239 and Ala311 each coordinate AMP. Positions 239 and 311 each coordinate ATP. 2 residues coordinate ADP: Ala311 and Asn335. The CDP site is built by Gly336 and Phe341. Positions 341, 342, 374, and 375 each coordinate ADP. Residue Glu342 participates in AMP binding. The ATP site is built by Glu342, Asp374, and Thr375. Mg(2+) is bound at residue Asp374.

Belongs to the phosphoglycerate kinase family. In terms of assembly, monomer. The cofactor is Mg(2+).

It localises to the glycosome. The catalysed reaction is (2R)-3-phosphoglycerate + ATP = (2R)-3-phospho-glyceroyl phosphate + ADP. Its pathway is carbohydrate degradation; glycolysis; pyruvate from D-glyceraldehyde 3-phosphate: step 2/5. This chain is Phosphoglycerate kinase, glycosomal (PGKC), found in Leishmania mexicana.